The chain runs to 429 residues: Probable proton-coupled zinc antiporter SLC30A4 (429 aa).

Residues 1 to 113 (MAGSGAWKRL…ILKQRKVKAR (113 aa)) lie on the Cytoplasmic side of the membrane. A helical membrane pass occupies residues 114-134 (LTIAAVLYLLFMIGELVGGYI). The Lumenal portion of the chain corresponds to 135–143 (ANSLAIMTD). A helical transmembrane segment spans residues 144 to 164 (ALHMLTDLSAIILTLLALWLS). Zn(2+) contacts are provided by H146 and D150. At 165-178 (SKSPTKRFTFGFHR) the chain is on the cytoplasmic side. A helical transmembrane segment spans residues 179–199 (LEVLSAMISVLLVYILMGFLL). Residues 200–216 (YEAVQRTIHMNYEINGD) lie on the Lumenal side of the membrane. The chain crosses the membrane as a helical span at residues 217–237 (IMLITAAVGVAVNVIMGFLLN). Topologically, residues 238–274 (QSGHRHSHSHSLPSNSPTRGSGCERNHGQDSLAVRAA) are cytoplasmic. Residues 240–264 (GHRHSHSHSLPSNSPTRGSGCERNH) are zinc binding. Residues 275-295 (FVHALGDLVQSVGVLIAAYII) traverse the membrane as a helical segment. Zn(2+) is bound by residues H277 and D281. Residues 296 to 310 (RFKPEYKIADPICTY) are Lumenal-facing. A helical membrane pass occupies residues 311–331 (VFSLLVAFTTFRIIWDTVVII). Topologically, residues 332–429 (LEGVPSHLNV…TCANCQSSSP (98 aa)) are cytoplasmic.

This sequence belongs to the cation diffusion facilitator (CDF) transporter (TC 2.A.4) family. SLC30A subfamily. In terms of assembly, homodimer; dityrosine-linked. Homodimerization could be specific of the human protein and enhances the zinc transport efficiency. Interacts with TMEM163. In terms of processing, homodimerization through dityrosine bonds is stimulated by oxidative stress.

The protein resides in the endosome membrane. It is found in the late endosome membrane. The protein localises to the lysosome membrane. The catalysed reaction is Zn(2+)(in) + 2 H(+)(out) = Zn(2+)(out) + 2 H(+)(in). Its function is as follows. Probable proton-coupled zinc ion antiporter mediating zinc import from cytoplasm potentially into the endocytic compartment. Controls zinc deposition in milk. This is Probable proton-coupled zinc antiporter SLC30A4 from Homo sapiens (Human).